Reading from the N-terminus, the 308-residue chain is Ribosomal RNA small subunit methyltransferase H (308 aa).

S-adenosyl-L-methionine-binding positions include 38–40 (GGH), Asp58, Phe82, Asp99, and Gln106.

Belongs to the methyltransferase superfamily. RsmH family.

It localises to the cytoplasm. The catalysed reaction is cytidine(1402) in 16S rRNA + S-adenosyl-L-methionine = N(4)-methylcytidine(1402) in 16S rRNA + S-adenosyl-L-homocysteine + H(+). In terms of biological role, specifically methylates the N4 position of cytidine in position 1402 (C1402) of 16S rRNA. The sequence is that of Ribosomal RNA small subunit methyltransferase H from Acidovorax ebreus (strain TPSY) (Diaphorobacter sp. (strain TPSY)).